A 325-amino-acid chain; its full sequence is Aldose 1-epimerase (325 aa).

Residue 73 to 74 participates in substrate binding; sequence NR. The Proton donor role is filled by H177. Residue D230 coordinates substrate. The active-site Proton acceptor is the E283.

It belongs to the aldose epimerase family.

The enzyme catalyses alpha-D-glucose = beta-D-glucose. It functions in the pathway carbohydrate metabolism; hexose metabolism. The polypeptide is Aldose 1-epimerase (galM) (Bacillus subtilis (strain 168)).